The primary structure comprises 168 residues: Peptide deformylase 2 (168 aa).

Fe cation-binding residues include C91 and H133. The active site involves E134. Position 137 (H137) interacts with Fe cation.

Belongs to the polypeptide deformylase family. The cofactor is Fe(2+).

It catalyses the reaction N-terminal N-formyl-L-methionyl-[peptide] + H2O = N-terminal L-methionyl-[peptide] + formate. Functionally, removes the formyl group from the N-terminal Met of newly synthesized proteins. Requires at least a dipeptide for an efficient rate of reaction. N-terminal L-methionine is a prerequisite for activity but the enzyme has broad specificity at other positions. This is Peptide deformylase 2 from Vibrio cholerae serotype O1 (strain ATCC 39315 / El Tor Inaba N16961).